The sequence spans 85 residues: UPF0335 protein BH15140 (85 aa).

The protein belongs to the UPF0335 family.

This is UPF0335 protein BH15140 from Bartonella henselae (strain ATCC 49882 / DSM 28221 / CCUG 30454 / Houston 1) (Rochalimaea henselae).